Consider the following 513-residue polypeptide: MPYLLEMKNITKTFGSVKAIDNVSLRLNAGEIVSLCGENGSGKSTLMKVLCGIYPHGSYEGEIIFAGEEIQASHIRDTERKGIAIIHQELALVKELTVLENIFLGNEITHNGIMDYDLMTLRYQKLLAQVSLSISPDTRVGDLGLGQQQLVEIAKALNKQVRLLILDEPTASLTEQETSVLLDIIRDLQQHGIACIYISHKLNEVKAISDTICVIRDGQHIGTRDAAGMSEDDIITMMVGRELTALYPNEPHTTGDEILRIEHLTAWHPVNRHIKRVNDISFSLKRGEILGIAGLVGAGRTETIQCLFGVWPGQWEGKIYIDGKQVDIRNCQQAIAQGIAMVPEDRKRDGIVPVMAVGKNITLAALNKFTGGISQLDDAAEQKCILESIQQLKVKTSSPDLAIGRLSGGNQQKAILARCLLLNPRILILDEPTRGIDIGAKYEIYKLINQLVQQGIAVIVISSELPEVLGLSDRVLVMHEGKLKANLINHNLTQEQVMEAALRSEHHVEKQSV.

ABC transporter domains are found at residues 5–242 (LEMK…VGRE) and 259–505 (LRIE…LRSE). 37–44 (GENGSGKS) is a binding site for ATP.

It belongs to the ABC transporter superfamily. Xylose importer (TC 3.A.1.2.4) family. The complex is composed of two ATP-binding proteins (XylG), two transmembrane proteins (XylH) and a solute-binding protein (XylF).

The protein resides in the cell inner membrane. The catalysed reaction is D-xylose(out) + ATP + H2O = D-xylose(in) + ADP + phosphate + H(+). Part of the ABC transporter complex XylFGH involved in xylose import. Responsible for energy coupling to the transport system. This is Xylose import ATP-binding protein XylG from Shigella flexneri serotype 5b (strain 8401).